Reading from the N-terminus, the 104-residue chain is uncharacterized protein (104 aa).

A helical transmembrane segment spans residues 80-98 (GSSLPLFDLVFILLSTFFL).

Its subcellular location is the membrane. This is an uncharacterized protein from Saccharomyces cerevisiae (strain ATCC 204508 / S288c) (Baker's yeast).